Consider the following 220-residue polypeptide: Small ribosomal subunit protein mS42 (220 aa).

The protein belongs to the mitochondrion-specific ribosomal protein mS42 family. In terms of assembly, component of the mitochondrial small ribosomal subunit (mt-SSU). Mature yeast 74S mitochondrial ribosomes consist of a small (37S) and a large (54S) subunit. The 37S small subunit contains a 15S ribosomal RNA (15S mt-rRNA) and at least 32 different proteins. The 54S large subunit contains a 21S rRNA (21S mt-rRNA) and at least 45 different proteins. mS43 forms a dimer with mS42, building a large protuberance adjacent to the mRNA channel exit in the mt-SSU body.

The protein resides in the mitochondrion. Component of the mitochondrial ribosome (mitoribosome), a dedicated translation machinery responsible for the synthesis of mitochondrial genome-encoded proteins, including at least some of the essential transmembrane subunits of the mitochondrial respiratory chain. The mitoribosomes are attached to the mitochondrial inner membrane and translation products are cotranslationally integrated into the membrane. This chain is Small ribosomal subunit protein mS42, found in Schizosaccharomyces pombe (strain 972 / ATCC 24843) (Fission yeast).